Reading from the N-terminus, the 64-residue chain is Prokaryotic ubiquitin-like protein UBact (64 aa).

Residues 1-64 (MFNGEEVILF…SERYRQRTGE (64 aa)) are disordered. The segment covering 22–64 (REIHKDAPAPKRPETKKTGDRLMDRMKKVDPNQSERYRQRTGE) has biased composition (basic and acidic residues). Residue Glu64 forms an Isoglutamyl lysine isopeptide (Glu-Lys) (interchain with K-? in acceptor proteins) linkage.

This sequence belongs to the ubiquitin-like protein UBact family.

Its function is as follows. May function as a protein modifier covalently attached to lysine residues of substrate proteins. This may serve to target the modified proteins for degradation by proteasomes. In Leptospirillum ferriphilum (strain ML-04), this protein is Prokaryotic ubiquitin-like protein UBact.